The chain runs to 154 residues: SsrA-binding protein (154 aa).

Belongs to the SmpB family.

The protein localises to the cytoplasm. Its function is as follows. Required for rescue of stalled ribosomes mediated by trans-translation. Binds to transfer-messenger RNA (tmRNA), required for stable association of tmRNA with ribosomes. tmRNA and SmpB together mimic tRNA shape, replacing the anticodon stem-loop with SmpB. tmRNA is encoded by the ssrA gene; the 2 termini fold to resemble tRNA(Ala) and it encodes a 'tag peptide', a short internal open reading frame. During trans-translation Ala-aminoacylated tmRNA acts like a tRNA, entering the A-site of stalled ribosomes, displacing the stalled mRNA. The ribosome then switches to translate the ORF on the tmRNA; the nascent peptide is terminated with the 'tag peptide' encoded by the tmRNA and targeted for degradation. The ribosome is freed to recommence translation, which seems to be the essential function of trans-translation. This Enterococcus hirae (strain ATCC 9790 / DSM 20160 / JCM 8729 / LMG 6399 / NBRC 3181 / NCIMB 6459 / NCDO 1258 / NCTC 12367 / WDCM 00089 / R) protein is SsrA-binding protein.